The following is a 104-amino-acid chain: NADH-quinone oxidoreductase subunit K (104 aa).

A run of 3 helical transmembrane segments spans residues 4-24 (VPAS…LFGA), 31-51 (VIVL…LVAF), and 67-87 (LFTM…LIAL).

Belongs to the complex I subunit 4L family. NDH-1 is composed of 14 different subunits. Subunits NuoA, H, J, K, L, M, N constitute the membrane sector of the complex.

It is found in the cell membrane. It carries out the reaction a quinone + NADH + 5 H(+)(in) = a quinol + NAD(+) + 4 H(+)(out). Its function is as follows. NDH-1 shuttles electrons from NADH, via FMN and iron-sulfur (Fe-S) centers, to quinones in the respiratory chain. The immediate electron acceptor for the enzyme in this species is believed to be a menaquinone. Couples the redox reaction to proton translocation (for every two electrons transferred, four hydrogen ions are translocated across the cytoplasmic membrane), and thus conserves the redox energy in a proton gradient. The protein is NADH-quinone oxidoreductase subunit K of Bacillus mycoides (strain KBAB4) (Bacillus weihenstephanensis).